The chain runs to 333 residues: Transcription initiation factor IIB (333 aa).

The TFIIB-type zinc-finger motif lies at Glu33–Gln64. Zn(2+) contacts are provided by Cys37, Cys40, Cys56, and Cys59. 2 repeat units span residues Gln149–Leu232 and Leu243–Lys324.

It belongs to the TFIIB family.

In terms of biological role, stabilizes TBP binding to an archaeal box-A promoter. Also responsible for recruiting RNA polymerase II to the pre-initiation complex (DNA-TBP-TFIIB). This Pyrobaculum islandicum (strain DSM 4184 / JCM 9189 / GEO3) protein is Transcription initiation factor IIB.